The following is a 722-amino-acid chain: D-(-)-3-hydroxybutyrate oligomer hydrolase (722 aa).

The first 25 residues, 1–25 (MKTMQGKGSGRRLRGALLVTMAASG), serve as a signal peptide directing secretion. S319 (charge relay system) is an active-site residue.

This sequence belongs to the D-(-)-3-hydroxybutyrate oligomer hydrolase family.

The protein resides in the secreted. It carries out the reaction (3R)-hydroxybutanoate dimer + H2O = 2 (R)-3-hydroxybutanoate + H(+). It participates in lipid metabolism; butanoate metabolism. Its activity is regulated as follows. Inhibited by diisopropylfluorophosphate (DFP). Participates in the degradation of poly-3-hydroxybutyrate (PHB). It works downstream of poly(3-hydroxybutyrate) depolymerase, hydrolyzing D(-)-3-hydroxybutyrate oligomers of various length (3HB-oligomers) into 3HB-monomers. The protein is D-(-)-3-hydroxybutyrate oligomer hydrolase of Ralstonia pickettii (Burkholderia pickettii).